Consider the following 796-residue polypeptide: Toll-like receptor 6 (796 aa).

The first 31 residues, 1 to 31 (MTKDKEPIVKSFHFVCLMIIIVGTRIQFSDG), serve as a signal peptide directing secretion. The Extracellular segment spans residues 32 to 586 (NEFAVDKSKR…MSELSCNITL (555 aa)). LRR repeat units lie at residues 54–77 (TKVL…FLSE), 78–101 (LTVL…FNQD), 102–122 (LEYL…PIVS), 123–147 (FRHL…NLSQ), 148–168 (LNFL…PIAH), 169–196 (LHLS…ILNA), 197–219 (KTLH…SVNT), 220–250 (LGCL…RGST), 251–277 (LLNF…WPKP), 278–303 (VEYL…SKTT), 304–330 (LKAL…VFSE), 331–354 (MNIM…APST), 355–378 (FKFL…TLVK), 379–404 (LETL…DMPS), 405–429 (LEIL…WVES), 430–450 (IVVL…CLPP), 451–474 (RIKV…KLEA), 475–496 (LQEL…SFSS), and 497–520 (LSVL…SCQK). A disulfide bridge connects residues Cys-117 and Cys-139. A glycan (N-linked (GlcNAc...) asparagine) is linked at Asn-144. N-linked (GlcNAc...) asparagine glycans are attached at residues Asn-186 and Asn-214. Cysteines 235 and 265 form a disulfide. N-linked (GlcNAc...) asparagine glycosylation is found at Asn-253 and Asn-285. An intrachain disulfide couples Cys-348 to Cys-373. Residue Asn-359 is glycosylated (N-linked (GlcNAc...) asparagine). 2 N-linked (GlcNAc...) asparagine glycosylation sites follow: Asn-423 and Asn-434. A disulfide bond links Cys-424 and Cys-447. In terms of domain architecture, LRRCT spans 521-575 (MRSIKAGDNPFQCTCELREFVKNIDQVSSEVLEGWPDSYKCDYPESYRGSPLKDF). The N-linked (GlcNAc...) asparagine glycan is linked to Asn-583. Residues 587-607 (LIVTIGATMLVLAVTVTSLCI) traverse the membrane as a helical segment. At 608–796 (YLDLPWYLRM…LVTENNDVKS (189 aa)) the chain is on the cytoplasmic side. In terms of domain architecture, TIR spans 640 to 781 (LQFHAFISYS…LFWANIRAAF (142 aa)).

It belongs to the Toll-like receptor family. Homodimer (via cytoplasmic TIR domain). Heterodimer with TLR2 via their respective extracellular domains. Binds MYD88 via their respective TIR domains. Interacts with CD36, following CD36 stimulation by oxLDL or amyloid-beta 42, and forms a heterodimer with TLR4. The trimeric complex is internalized and triggers inflammatory response. LYN kinase activity facilitates TLR4:TLR6 heterodimerization and signal initiation. The heterodimer TLR2:TLR6 interacts with CD14 and CD36 in response to triacylated lipopeptides. As to expression, detected in monocytes, CD11c+ immature dendritic cells, plasmacytoid pre-dendritic cells and dermal microvessel endothelial cells.

Its subcellular location is the cell membrane. It localises to the cytoplasmic vesicle. It is found in the phagosome membrane. The protein localises to the membrane raft. The protein resides in the golgi apparatus. Participates in the innate immune response to Gram-positive bacteria and fungi. Specifically recognizes diacylated and, to a lesser extent, triacylated lipopeptides. In response to diacylated lipopeptides, forms the activation cluster TLR2:TLR6:CD14:CD36, this cluster triggers signaling from the cell surface and subsequently is targeted to the Golgi in a lipid-raft dependent pathway. Acts via MYD88 and TRAF6, leading to NF-kappa-B activation, cytokine secretion and the inflammatory response. Recognizes mycoplasmal macrophage-activating lipopeptide-2kD (MALP-2), soluble tuberculosis factor (STF), phenol-soluble modulin (PSM) and B.burgdorferi outer surface protein A lipoprotein (OspA-L) cooperatively with TLR2. In complex with TLR4, promotes sterile inflammation in monocytes/macrophages in response to oxidized low-density lipoprotein (oxLDL) or amyloid-beta 42. In this context, the initial signal is provided by oxLDL- or amyloid-beta 42-binding to CD36. This event induces the formation of a heterodimer of TLR4 and TLR6, which is rapidly internalized and triggers inflammatory response, leading to the NF-kappa-B-dependent production of CXCL1, CXCL2 and CCL9 cytokines, via MYD88 signaling pathway, and CCL5 cytokine, via TICAM1 signaling pathway, as well as IL1B secretion. The protein is Toll-like receptor 6 (TLR6) of Homo sapiens (Human).